The primary structure comprises 408 residues: Imidazolonepropionase (408 aa).

The Fe(3+) site is built by H72 and H74. 2 residues coordinate Zn(2+): H72 and H74. 3 residues coordinate 4-imidazolone-5-propanoate: R81, Y144, and H177. Y144 provides a ligand contact to N-formimidoyl-L-glutamate. H242 provides a ligand contact to Fe(3+). Residue H242 participates in Zn(2+) binding. A 4-imidazolone-5-propanoate-binding site is contributed by Q245. Residue D317 coordinates Fe(3+). Position 317 (D317) interacts with Zn(2+). N-formimidoyl-L-glutamate contacts are provided by N319 and G321. T322 lines the 4-imidazolone-5-propanoate pocket.

The protein belongs to the metallo-dependent hydrolases superfamily. HutI family. Zn(2+) serves as cofactor. Fe(3+) is required as a cofactor.

Its subcellular location is the cytoplasm. The enzyme catalyses 4-imidazolone-5-propanoate + H2O = N-formimidoyl-L-glutamate. It functions in the pathway amino-acid degradation; L-histidine degradation into L-glutamate; N-formimidoyl-L-glutamate from L-histidine: step 3/3. In terms of biological role, catalyzes the hydrolytic cleavage of the carbon-nitrogen bond in imidazolone-5-propanoate to yield N-formimidoyl-L-glutamate. It is the third step in the universal histidine degradation pathway. This chain is Imidazolonepropionase, found in Aliivibrio fischeri (strain MJ11) (Vibrio fischeri).